The primary structure comprises 74 residues: Translational regulator CsrA (74 aa).

This sequence belongs to the CsrA/RsmA family. In terms of assembly, homodimer; the beta-strands of each monomer intercalate to form a hydrophobic core, while the alpha-helices form wings that extend away from the core.

The protein localises to the cytoplasm. In terms of biological role, a translational regulator that binds mRNA to regulate translation initiation and/or mRNA stability. Usually binds in the 5'-UTR at or near the Shine-Dalgarno sequence preventing ribosome-binding, thus repressing translation. Its main target seems to be the major flagellin gene, while its function is anatagonized by FliW. This chain is Translational regulator CsrA, found in Oceanobacillus iheyensis (strain DSM 14371 / CIP 107618 / JCM 11309 / KCTC 3954 / HTE831).